The chain runs to 489 residues: UDP-N-acetylmuramate--L-alanine ligase (489 aa).

128–134 (GTHGKTT) is an ATP binding site.

It belongs to the MurCDEF family.

The protein localises to the cytoplasm. It catalyses the reaction UDP-N-acetyl-alpha-D-muramate + L-alanine + ATP = UDP-N-acetyl-alpha-D-muramoyl-L-alanine + ADP + phosphate + H(+). Its pathway is cell wall biogenesis; peptidoglycan biosynthesis. Functionally, cell wall formation. This is UDP-N-acetylmuramate--L-alanine ligase from Shewanella halifaxensis (strain HAW-EB4).